We begin with the raw amino-acid sequence, 101 residues long: Putative defensin-like protein 253 (101 aa).

A signal peptide spans 1–23; that stretch reads MRFASLFVVYCTFMFLDISHVKC. 4 disulfides stabilise this stretch: C31–C84, C41–C66, C49–C76, and C64–C78.

This sequence belongs to the DEFL family.

It is found in the secreted. The protein is Putative defensin-like protein 253 (SCRL15) of Arabidopsis thaliana (Mouse-ear cress).